The chain runs to 155 residues: Urease accessory protein UreE (155 aa).

This sequence belongs to the UreE family.

The protein localises to the cytoplasm. Its function is as follows. Involved in urease metallocenter assembly. Binds nickel. Probably functions as a nickel donor during metallocenter assembly. The sequence is that of Urease accessory protein UreE from Synechococcus sp. (strain CC9311).